Reading from the N-terminus, the 614-residue chain is DNA repair protein rad26 (614 aa).

Over residues 29 to 43 (QAQTQVQAQSSQVVV) the composition is skewed to low complexity. Disordered stretches follow at residues 29-76 (QAQT…QASL) and 157-214 (KKMK…TAED). Composition is skewed to polar residues over residues 50–76 (QNLNLPNSYTNSSQKVRESTVNSQASL) and 181–190 (LLSSSDQLAK). The segment covering 191–207 (STKHAAKNSPSKKKRKT) has biased composition (basic residues).

Interacts with cds1.

It localises to the nucleus. Involved in cell cycle arrest when DNA synthesis is inhibited by hydroxyurea, and in mitosis arrest after treatment with DNA-damaging agents. This protein is S phase-specific. This chain is DNA repair protein rad26 (rad26), found in Schizosaccharomyces pombe (strain 972 / ATCC 24843) (Fission yeast).